A 75-amino-acid polypeptide reads, in one-letter code: UPF0352 protein YejL (75 aa).

It belongs to the UPF0352 family.

The protein is UPF0352 protein YejL of Shigella sonnei (strain Ss046).